The sequence spans 223 residues: Deoxyribose-phosphate aldolase (223 aa).

Asp91 serves as the catalytic Proton donor/acceptor. Lys153 serves as the catalytic Schiff-base intermediate with acetaldehyde. The Proton donor/acceptor role is filled by Lys182.

It belongs to the DeoC/FbaB aldolase family. DeoC type 1 subfamily.

It localises to the cytoplasm. The enzyme catalyses 2-deoxy-D-ribose 5-phosphate = D-glyceraldehyde 3-phosphate + acetaldehyde. It functions in the pathway carbohydrate degradation; 2-deoxy-D-ribose 1-phosphate degradation; D-glyceraldehyde 3-phosphate and acetaldehyde from 2-deoxy-alpha-D-ribose 1-phosphate: step 2/2. Catalyzes a reversible aldol reaction between acetaldehyde and D-glyceraldehyde 3-phosphate to generate 2-deoxy-D-ribose 5-phosphate. The protein is Deoxyribose-phosphate aldolase of Streptococcus pyogenes serotype M1.